Reading from the N-terminus, the 1128-residue chain is Mastermind-like protein 2 (1128 aa).

Disordered regions lie at residues 1 to 22 (MGDT…GAGL) and 81 to 167 (QHGQ…GDQR). Positions 12-22 (GGLGGAPGAGL) are enriched in gly residues. Over residues 113 to 122 (PTASQTAAPA) the composition is skewed to low complexity. Serine 177 carries the post-translational modification Phosphoserine. Disordered regions lie at residues 343–509 (FNID…GSNQ), 521–649 (SPSA…SNQP), 677–714 (QVSQ…GYMN), 758–794 (QDQI…GSST), and 1039–1073 (GTGL…QGTD). 2 stretches are compositionally biased toward polar residues: residues 347–357 (LGQQSQRSTPR) and 374–387 (GLTQ…QLRP). Low complexity predominate over residues 395-426 (SMASSGLSASSPIPSVPQSQAQPPPATGAARA). Polar residues predominate over residues 431 to 446 (QEVSHAQQLKQIAANR). Low complexity-rich tracts occupy residues 453 to 473 (HQQQ…SAGP) and 484 to 497 (PSPS…SPQS). Positions 566 to 584 (NSDQANQQMPSVLPSQSKP) are enriched in polar residues. Over residues 590 to 649 (TQQQPQQSSITVQPQQQQQQPQQQQQPQQQQQPQPQQQQQQQPQAQQPAAQPTQPLSNQP) the composition is skewed to low complexity. Polar residues-rich tracts occupy residues 677 to 695 (QVSQ…QNAG), 778 to 794 (NVGN…GSST), and 1039 to 1052 (GTGL…SQPP).

Belongs to the mastermind family. In terms of assembly, interacts through its N-terminal region with the ankyrin repeat region of the Notch proteins NOTCH1, NOTCH2, NOTCH3 and NOTCH4. Forms a DNA-binding complex with Notch proteins and RBPSUH/RBP-J kappa.

The protein localises to the nucleus speckle. Its function is as follows. Acts as a transcriptional coactivator for NOTCH proteins. Has been shown to amplify NOTCH-induced transcription of HES1. Potentiates activation by NOTCH3 and NOTCH4 more efficiently than MAML1 or MAML3. This is Mastermind-like protein 2 (MAML2) from Bos taurus (Bovine).